The sequence spans 560 residues: MYSKLKTEINESIKEALTKLRIKYDDEIILEEPPNPSMGDMSTNIAFSLASKLKKSPVEIAQEIKENIKLPLYFEKVETKGPYINFYINYTLFTTKVVNYIDKNYGELPEKDERILLEHTSANPNGPLHVGHLRNAILGDSLKRILQHAGYKVEAQYYVNDMGRQIAIIVWGMDKFNYTVDDDKKADHAIGEVYYKCNQQLEANPEYNQEIDDILRKYEEGTDAALIDAFQGVVEYCIDGIKETLKDLNIKMNLFKWESTFLRNGSVDDVLEKLQPFTIQKDILYLPLERYNVDKELVLRRSNGTSLYATRDLAYHQYKTKNSDISLDILGADHKLAAKQLGLALELSNNRAPEVVFYEFIDLPEGSMSTRKGVFISVDEFIEQSVEHAKEELIRRDLDLTEKQIEEVSKIVGVGSIRFYINQISPEKPITFKWEEALSFERGCASIQYAHARACKLLAKSDYNEFEEVRCDYELDDEEKDLIKTLSQFTEVICQSAQERRVHHLAQYTLSLSKAFNKFYKSKQVIGSEHEKLRLKLVDASRITLKNSLKLLGIKSPEFM.

Residues 122-132 carry the 'HIGH' region motif; it reads ANPNGPLHVGH.

It belongs to the class-I aminoacyl-tRNA synthetase family.

The protein localises to the cytoplasm. The catalysed reaction is tRNA(Arg) + L-arginine + ATP = L-arginyl-tRNA(Arg) + AMP + diphosphate. The chain is Arginine--tRNA ligase from Methanosphaera stadtmanae (strain ATCC 43021 / DSM 3091 / JCM 11832 / MCB-3).